Reading from the N-terminus, the 160-residue chain is Vesicle transport protein SFT2B (160 aa).

Residue M1 is modified to N-acetylmethionine. At 1 to 36 the chain is on the cytoplasmic side; that stretch reads MDKLKKVLSGQDTEDRSGLSEVVEASSLSWSTRIKG. A Phosphoserine modification is found at S9. The helical transmembrane segment at 37–57 threads the bilayer; it reads FIACFAIGILCSLLGTVLLWV. The Lumenal segment spans residues 58-63; the sequence is PRKGLH. A helical membrane pass occupies residues 64 to 84; that stretch reads LFAVFYTFGNIASIGSTIFLM. Over 85 to 98 the chain is Cytoplasmic; that stretch reads GPVKQLKRMFEPTR. Residues 99–119 traverse the membrane as a helical segment; that stretch reads LIATIMVLLCFALTLCSAFWW. The Lumenal segment spans residues 120–123; sequence HNKG. The helical transmembrane segment at 124 to 144 threads the bilayer; sequence LALIFCILQSLALTWYSLSFI. The Cytoplasmic portion of the chain corresponds to 145–160; it reads PFARDAVKKCFAVCLA.

It belongs to the SFT2 family.

It localises to the membrane. Its function is as follows. May be involved in fusion of retrograde transport vesicles derived from an endocytic compartment with the Golgi complex. The chain is Vesicle transport protein SFT2B from Homo sapiens (Human).